Here is a 450-residue protein sequence, read N- to C-terminus: Zinc metalloproteinase nas-13 (450 aa).

A signal peptide spans methionine 1–alanine 31. Residue asparagine 68 is glycosylated (N-linked (GlcNAc...) asparagine). The region spanning asparagine 110–proline 303 is the Peptidase M12A domain. 2 disulfide bridges follow: cysteine 152–cysteine 302 and cysteine 174–cysteine 193. Residue histidine 201 coordinates Zn(2+). Glutamate 202 is an active-site residue. 2 residues coordinate Zn(2+): histidine 205 and histidine 211. Asparagine 225 carries N-linked (GlcNAc...) asparagine glycosylation. The short motif at arginine 349–aspartate 351 is the Cell attachment site element. 6 cysteine pairs are disulfide-bonded: cysteine 368–cysteine 404, cysteine 375–cysteine 397, cysteine 384–cysteine 401, cysteine 414–cysteine 450, cysteine 421–cysteine 443, and cysteine 430–cysteine 447. ShKT domains are found at residues cysteine 368–cysteine 404 and cysteine 414–cysteine 450. Asparagine 431 is a glycosylation site (N-linked (GlcNAc...) asparagine).

It depends on Zn(2+) as a cofactor.

It localises to the secreted. In terms of biological role, metalloprotease. The polypeptide is Zinc metalloproteinase nas-13 (nas-13) (Caenorhabditis elegans).